The sequence spans 862 residues: Taxadiene synthase (862 aa).

Mg(2+) is bound by residues aspartate 613, aspartate 617, asparagine 757, threonine 761, and glutamate 765. A DDXXD motif motif is present at residues 613–617 (DDMAD).

It belongs to the terpene synthase family. Mg(2+) is required as a cofactor.

It carries out the reaction (2E,6E,10E)-geranylgeranyl diphosphate = taxa-4(5),11(12)-diene + diphosphate. It participates in alkaloid biosynthesis; taxol biosynthesis; taxa-4(20),11-dien-5alpha-ol from geranylgeranyl diphosphate: step 1/2. Catalyzes the cyclization of the ubiquitous isoprenoid intermediate geranylgeranyl diphosphate to taxa-4,11-diene, the parent olefin with a taxane skeleton. The chain is Taxadiene synthase (TDC1) from Taxus brevifolia (Pacific yew).